The chain runs to 256 residues: Pyridoxine 5'-phosphate synthase (256 aa).

Position 12 (Asn-12) interacts with 3-amino-2-oxopropyl phosphate. Residue 14–15 participates in 1-deoxy-D-xylulose 5-phosphate binding; sequence DH. 3-amino-2-oxopropyl phosphate is bound at residue Arg-23. His-48 functions as the Proton acceptor in the catalytic mechanism. 1-deoxy-D-xylulose 5-phosphate-binding residues include Arg-50 and His-55. Residue Glu-75 is the Proton acceptor of the active site. Thr-105 lines the 1-deoxy-D-xylulose 5-phosphate pocket. The Proton donor role is filled by His-199. Residues Gly-200 and 221-222 each bind 3-amino-2-oxopropyl phosphate; that span reads GY.

Belongs to the PNP synthase family. Homooctamer; tetramer of dimers.

Its subcellular location is the cytoplasm. It catalyses the reaction 3-amino-2-oxopropyl phosphate + 1-deoxy-D-xylulose 5-phosphate = pyridoxine 5'-phosphate + phosphate + 2 H2O + H(+). The protein operates within cofactor biosynthesis; pyridoxine 5'-phosphate biosynthesis; pyridoxine 5'-phosphate from D-erythrose 4-phosphate: step 5/5. Its function is as follows. Catalyzes the complicated ring closure reaction between the two acyclic compounds 1-deoxy-D-xylulose-5-phosphate (DXP) and 3-amino-2-oxopropyl phosphate (1-amino-acetone-3-phosphate or AAP) to form pyridoxine 5'-phosphate (PNP) and inorganic phosphate. The polypeptide is Pyridoxine 5'-phosphate synthase (Bradyrhizobium sp. (strain ORS 278)).